A 153-amino-acid chain; its full sequence is Bursicon (153 aa).

An N-terminal signal peptide occupies residues 1-22 (MLLYHIVGASVLICLLNETAKA). 5 disulfide bridges follow: C29/C78, C43/C92, C53/C113, C57/C115, and C75/C118. Residues 29–119 (CQATPVIHFL…PLECMCRPCT (91 aa)) form the CTCK domain.

As to quaternary structure, heterodimer of burs and pburs.

The protein resides in the secreted. In terms of biological role, final heterodimeric neurohormone released at the end of the molting cycle, involved in the sclerotization (tanning) of the insect cuticle, melanization and wing spreading. The sequence is that of Bursicon from Apis mellifera (Honeybee).